Consider the following 376-residue polypeptide: 4-hydroxy-3-methylbut-2-enyl diphosphate reductase (376 aa).

[4Fe-4S] cluster is bound at residue cysteine 19. (2E)-4-hydroxy-3-methylbut-2-enyl diphosphate is bound by residues histidine 48 and histidine 99. Dimethylallyl diphosphate-binding residues include histidine 48 and histidine 99. The isopentenyl diphosphate site is built by histidine 48 and histidine 99. Position 121 (cysteine 121) interacts with [4Fe-4S] cluster. Histidine 149 is a (2E)-4-hydroxy-3-methylbut-2-enyl diphosphate binding site. Histidine 149 lines the dimethylallyl diphosphate pocket. Histidine 149 contacts isopentenyl diphosphate. The active-site Proton donor is the glutamate 151. Threonine 208 contacts (2E)-4-hydroxy-3-methylbut-2-enyl diphosphate. A [4Fe-4S] cluster-binding site is contributed by cysteine 236. (2E)-4-hydroxy-3-methylbut-2-enyl diphosphate contacts are provided by serine 264, asparagine 266, and serine 307. Dimethylallyl diphosphate contacts are provided by serine 264, asparagine 266, and serine 307. 3 residues coordinate isopentenyl diphosphate: serine 264, asparagine 266, and serine 307.

The protein belongs to the IspH family. [4Fe-4S] cluster is required as a cofactor.

The enzyme catalyses isopentenyl diphosphate + 2 oxidized [2Fe-2S]-[ferredoxin] + H2O = (2E)-4-hydroxy-3-methylbut-2-enyl diphosphate + 2 reduced [2Fe-2S]-[ferredoxin] + 2 H(+). The catalysed reaction is dimethylallyl diphosphate + 2 oxidized [2Fe-2S]-[ferredoxin] + H2O = (2E)-4-hydroxy-3-methylbut-2-enyl diphosphate + 2 reduced [2Fe-2S]-[ferredoxin] + 2 H(+). It participates in isoprenoid biosynthesis; dimethylallyl diphosphate biosynthesis; dimethylallyl diphosphate from (2E)-4-hydroxy-3-methylbutenyl diphosphate: step 1/1. Its pathway is isoprenoid biosynthesis; isopentenyl diphosphate biosynthesis via DXP pathway; isopentenyl diphosphate from 1-deoxy-D-xylulose 5-phosphate: step 6/6. Catalyzes the conversion of 1-hydroxy-2-methyl-2-(E)-butenyl 4-diphosphate (HMBPP) into a mixture of isopentenyl diphosphate (IPP) and dimethylallyl diphosphate (DMAPP). Acts in the terminal step of the DOXP/MEP pathway for isoprenoid precursor biosynthesis. This is 4-hydroxy-3-methylbut-2-enyl diphosphate reductase from Treponema pallidum (strain Nichols).